A 344-amino-acid chain; its full sequence is Nuclear distribution protein nudE-like 1-B (344 aa).

A coiled-coil region spans residues Lys13 to Gly190. Disordered stretches follow at residues Arg186 to Ser209 and Pro325 to Val344. Positions Pro333 to Val344 are enriched in pro residues.

Belongs to the nudE family. In terms of processing, phosphorylated in mitosis.

The protein localises to the cytoplasm. The protein resides in the cytoskeleton. Its subcellular location is the microtubule organizing center. It localises to the centrosome. It is found in the spindle. In terms of biological role, required for organization of the cellular microtubule array and microtubule anchoring at the centrosome. Positively regulates the activity of the minus-end directed microtubule motor protein dynein. May enhance dynein-mediated microtubule sliding by targeting dynein to the microtubule plus end. Positively regulates lysosome peripheral distribution and ruffled border formation in osteoclasts. The polypeptide is Nuclear distribution protein nudE-like 1-B (ndel1-b) (Xenopus laevis (African clawed frog)).